We begin with the raw amino-acid sequence, 77 residues long: Probable small nuclear ribonucleoprotein G (77 aa).

Residues 4–76 (THPPELKKYM…VVIMEPKERI (73 aa)) enclose the Sm domain.

This sequence belongs to the snRNP Sm proteins family. As to quaternary structure, core component of the spliceosomal U1, U2, U4 and U5 small nuclear ribonucleoproteins (snRNPs), the building blocks of the spliceosome.

Its subcellular location is the cytoplasm. The protein localises to the cytosol. It localises to the nucleus. Plays a role in pre-mRNA splicing as a core component of the spliceosomal U1, U2, U4 and U5 small nuclear ribonucleoproteins (snRNPs), the building blocks of the spliceosome. The polypeptide is Probable small nuclear ribonucleoprotein G (snr-7) (Caenorhabditis elegans).